The chain runs to 323 residues: tRNA U34 carboxymethyltransferase (323 aa).

Carboxy-S-adenosyl-L-methionine is bound by residues lysine 91, tryptophan 105, lysine 110, glycine 130, 181–182 (IE), methionine 196, tyrosine 200, and arginine 315.

The protein belongs to the class I-like SAM-binding methyltransferase superfamily. CmoB family. In terms of assembly, homotetramer.

It carries out the reaction carboxy-S-adenosyl-L-methionine + 5-hydroxyuridine(34) in tRNA = 5-carboxymethoxyuridine(34) in tRNA + S-adenosyl-L-homocysteine + H(+). Functionally, catalyzes carboxymethyl transfer from carboxy-S-adenosyl-L-methionine (Cx-SAM) to 5-hydroxyuridine (ho5U) to form 5-carboxymethoxyuridine (cmo5U) at position 34 in tRNAs. The chain is tRNA U34 carboxymethyltransferase from Sodalis glossinidius (strain morsitans).